We begin with the raw amino-acid sequence, 867 residues long: Mitochondrial escape protein 2 (867 aa).

Residues 1 to 25 (MIIRTLRSQLRLPKPVYISPPCRYY) constitute a mitochondrion transit peptide. At 26–279 (STDLEKLKKE…LVSLISNHTK (254 aa)) the chain is on the mitochondrial matrix side. In terms of domain architecture, RRM spans 179–264 (GTPWIEDLRR…TTLHIQFVAI (86 aa)). Residues 280–300 (IAIPVLIALLATFAVLIFDPI) form a helical membrane-spanning segment. The Mitochondrial intermembrane portion of the chain corresponds to 301-867 (REWFIEYKIL…DGKSFLGIKF (567 aa)). A coiled-coil region spans residues 795–852 (IGRLISLEAAKIQKLEEELEKIYKIGKVDGRIDYVSQKIEASNKKILDLEKQAADVAS).

This sequence belongs to the YME2 family.

The protein resides in the mitochondrion inner membrane. Plays a role in maintaining the mitochondrial genome and in controlling the mtDNA escape. Involved in the regulation of mtDNA nucleotide structure and number. May have a dispensable role in early maturation of pre-rRNA. In Candida albicans (strain SC5314 / ATCC MYA-2876) (Yeast), this protein is Mitochondrial escape protein 2 (PRP13).